The primary structure comprises 368 residues: Phosphoserine aminotransferase (368 aa).

Arg44 contacts L-glutamate. Pyridoxal 5'-phosphate-binding positions include 78–79, Trp104, Thr157, Asp179, and Gln202; that span reads AT. The residue at position 203 (Lys203) is an N6-(pyridoxal phosphate)lysine. 244-245 contributes to the pyridoxal 5'-phosphate binding site; sequence NT.

Belongs to the class-V pyridoxal-phosphate-dependent aminotransferase family. SerC subfamily. Homodimer. Pyridoxal 5'-phosphate serves as cofactor.

It is found in the cytoplasm. The catalysed reaction is O-phospho-L-serine + 2-oxoglutarate = 3-phosphooxypyruvate + L-glutamate. It carries out the reaction 4-(phosphooxy)-L-threonine + 2-oxoglutarate = (R)-3-hydroxy-2-oxo-4-phosphooxybutanoate + L-glutamate. The protein operates within amino-acid biosynthesis; L-serine biosynthesis; L-serine from 3-phospho-D-glycerate: step 2/3. Its pathway is cofactor biosynthesis; pyridoxine 5'-phosphate biosynthesis; pyridoxine 5'-phosphate from D-erythrose 4-phosphate: step 3/5. Its function is as follows. Catalyzes the reversible conversion of 3-phosphohydroxypyruvate to phosphoserine and of 3-hydroxy-2-oxo-4-phosphonooxybutanoate to phosphohydroxythreonine. This is Phosphoserine aminotransferase from Neisseria meningitidis serogroup B (strain ATCC BAA-335 / MC58).